We begin with the raw amino-acid sequence, 322 residues long: HPr kinase/phosphorylase (322 aa).

Residues H146 and K167 contribute to the active site. 161–168 (GDSGLGKS) lines the ATP pocket. S168 provides a ligand contact to Mg(2+). The active-site Proton acceptor; for phosphorylation activity. Proton donor; for dephosphorylation activity is D185. Positions 209–218 (LEVRGLGLLD) are important for the catalytic mechanism of both phosphorylation and dephosphorylation. E210 serves as a coordination point for Mg(2+). R250 is a catalytic residue. Positions 271-276 (QVAAGR) are important for the catalytic mechanism of dephosphorylation.

Belongs to the HPrK/P family. In terms of assembly, homohexamer. Requires Mg(2+) as cofactor.

It carries out the reaction [HPr protein]-L-serine + ATP = [HPr protein]-O-phospho-L-serine + ADP + H(+). It catalyses the reaction [HPr protein]-O-phospho-L-serine + phosphate + H(+) = [HPr protein]-L-serine + diphosphate. Its function is as follows. Catalyzes the ATP- as well as the pyrophosphate-dependent phosphorylation of a specific serine residue in HPr, a phosphocarrier protein of the phosphoenolpyruvate-dependent sugar phosphotransferase system (PTS). HprK/P also catalyzes the pyrophosphate-producing, inorganic phosphate-dependent dephosphorylation (phosphorolysis) of seryl-phosphorylated HPr (P-Ser-HPr). The polypeptide is HPr kinase/phosphorylase (Paraburkholderia phymatum (strain DSM 17167 / CIP 108236 / LMG 21445 / STM815) (Burkholderia phymatum)).